A 122-amino-acid polypeptide reads, in one-letter code: Putative 2'-deoxynucleoside 5'-phosphate N-hydrolase 1 (122 aa).

Residues Phe-4–Arg-10, Tyr-19, His-37, Glu-83, and Ser-105–Met-107 each bind substrate.

This sequence belongs to the 2'-deoxynucleoside 5'-phosphate N-hydrolase 1 family. Monomer and homodimer.

The catalysed reaction is a pyrimidine 2'-deoxyribonucleoside 5'-phosphate + H2O = a pyrimidine nucleobase + 2-deoxy-D-ribose 5-phosphate. It carries out the reaction a purine 2'-deoxyribonucleoside 5'-phosphate + H2O = a purine nucleobase + 2-deoxy-D-ribose 5-phosphate. In terms of biological role, catalyzes the cleavage of the N-glycosidic bond of deoxyribonucleoside 5'-monophosphates to yield deoxyribose 5-phosphate and a purine or pyrimidine base. The protein is Putative 2'-deoxynucleoside 5'-phosphate N-hydrolase 1 of Methanococcoides burtonii (strain DSM 6242 / NBRC 107633 / OCM 468 / ACE-M).